Consider the following 277-residue polypeptide: tRNA pseudouridine synthase A (277 aa).

D51 functions as the Nucleophile in the catalytic mechanism. Residue Y109 participates in substrate binding.

This sequence belongs to the tRNA pseudouridine synthase TruA family. Homodimer.

The enzyme catalyses uridine(38/39/40) in tRNA = pseudouridine(38/39/40) in tRNA. Formation of pseudouridine at positions 38, 39 and 40 in the anticodon stem and loop of transfer RNAs. This is tRNA pseudouridine synthase A from Nitrosomonas eutropha (strain DSM 101675 / C91 / Nm57).